An 880-amino-acid polypeptide reads, in one-letter code: GATOR2 complex protein MIOS-A (880 aa).

6 WD repeats span residues 60–102 (SDTP…NSKC), 113–157 (KHAR…TPEV), 185–224 (GQND…QKMF), 226–264 (NTKA…KPVL), 268–309 (EQPK…TPIG), and 399–441 (RLRA…KQYA). The C4-type zinc-finger motif lies at 740–786 (VSCNFCGKSISYSCSSVPHQGRGFSQYGVSGSPTKSKFTSCPGCRKP). C742, C745, C780, C783, C793, C832, C835, H837, H840, H843, C854, C859, and C863 together coordinate Zn(2+). An RING-type; atypical zinc finger spans residues 787–868 (LPRCALCLIN…CSCKCMQLDT (82 aa)).

It belongs to the WD repeat mio family. In terms of assembly, component of the GATOR2 subcomplex, composed of MIOS, SEC13, SEH1L, WDR24 and WDR59. The GATOR2 complex interacts with CASTOR1 and CASTOR2; the interaction is negatively regulated by arginine. The GATOR2 complex interacts with SESN1, SESN2 and SESN3; the interaction is negatively regulated by amino acids. Interacts with SAR1; the interaction is direct, disrupted by leucine and mediates the interaction of SAR1 with the GATOR2 complex to negatively regulate the TORC1 signaling upon leucine deprivation.

The protein localises to the lysosome membrane. The GATOR2 complex is negatively regulated by the upstream amino acid sensors CASTOR1 and SESN2, which sequester the GATOR2 complex in absence of amino acids. In the presence of abundant amino acids, GATOR2 is released from CASTOR1 and SESN2 and activated. In terms of biological role, as a component of the GATOR2 complex, functions as an activator of the amino acid-sensing branch of the mTORC1 signaling pathway. The GATOR2 complex indirectly activates mTORC1 through the inhibition of the GATOR1 subcomplex. GATOR2 probably acts as an E3 ubiquitin-protein ligase toward GATOR1. In the presence of abundant amino acids, the GATOR2 complex mediates ubiquitination of the NPRL2 core component of the GATOR1 complex, leading to GATOR1 inactivation. In the absence of amino acids, GATOR2 is inhibited, activating the GATOR1 complex. Within the GATOR2 complex, MIOS is required to prevent autoubiquitination of WDR24, the catalytic subunit of the complex. The polypeptide is GATOR2 complex protein MIOS-A (Xenopus laevis (African clawed frog)).